A 75-amino-acid polypeptide reads, in one-letter code: Translation initiation factor IF-1, chloroplastic (75 aa).

It belongs to the IF-1 family. Component of the 30S ribosomal translation pre-initiation complex which assembles on the 30S ribosome in the order IF-2 and IF-3, IF-1 and N-formylmethionyl-tRNA(fMet); mRNA recruitment can occur at any time during PIC assembly.

Its subcellular location is the plastid. It localises to the chloroplast. Its function is as follows. One of the essential components for the initiation of protein synthesis. Stabilizes the binding of IF-2 and IF-3 on the 30S subunit to which N-formylmethionyl-tRNA(fMet) subsequently binds. Helps modulate mRNA selection, yielding the 30S pre-initiation complex (PIC). Upon addition of the 50S ribosomal subunit IF-1, IF-2 and IF-3 are released leaving the mature 70S translation initiation complex. The chain is Translation initiation factor IF-1, chloroplastic (infA) from Cucumis sativus (Cucumber).